Here is a 574-residue protein sequence, read N- to C-terminus: Glycine--tRNA ligase (574 aa).

Residues Arg96 and Glu162 each contribute to the substrate site. ATP is bound by residues 194–196, 204–209, 327–328, and 450–453; these read RNE, IRLREF, EC, and GIDR. 209 to 213 contacts substrate; sequence FTQAE. 446 to 450 is a binding site for substrate; the sequence is EPSYG.

It belongs to the class-II aminoacyl-tRNA synthetase family.

The protein resides in the cytoplasm. It carries out the reaction tRNA(Gly) + glycine + ATP = glycyl-tRNA(Gly) + AMP + diphosphate. Catalyzes the attachment of glycine to tRNA(Gly). The sequence is that of Glycine--tRNA ligase from Methanococcus maripaludis (strain DSM 14266 / JCM 13030 / NBRC 101832 / S2 / LL).